The following is a 78-amino-acid chain: Large ribosomal subunit protein bL28 (78 aa).

The interval 1 to 29 (MSAHCQVTGRKPSFGKSVSHSHRRTSRRW) is disordered.

Belongs to the bacterial ribosomal protein bL28 family.

The polypeptide is Large ribosomal subunit protein bL28 (Corynebacterium glutamicum (strain ATCC 13032 / DSM 20300 / JCM 1318 / BCRC 11384 / CCUG 27702 / LMG 3730 / NBRC 12168 / NCIMB 10025 / NRRL B-2784 / 534)).